The sequence spans 295 residues: Sulfotransferase 1A1 (295 aa).

48–53 (KSGTTW) contacts 3'-phosphoadenylyl sulfate. 106-108 (KTH) provides a ligand contact to substrate. Residue His-108 is the Proton acceptor of the active site. Residues Arg-130, Ser-138, Tyr-193, 227–232 (TSFKEM), and 255–259 (FMRKG) each bind 3'-phosphoadenylyl sulfate. A Phosphoserine modification is found at Ser-138.

Belongs to the sulfotransferase 1 family. In terms of assembly, homodimer.

It is found in the cytoplasm. It catalyses the reaction a phenol + 3'-phosphoadenylyl sulfate = an aryl sulfate + adenosine 3',5'-bisphosphate + H(+). The catalysed reaction is 17beta-estradiol + 3'-phosphoadenylyl sulfate = 17beta-estradiol 3-sulfate + adenosine 3',5'-bisphosphate + H(+). It carries out the reaction 4-ethylphenol + 3'-phosphoadenylyl sulfate = 4-ethylphenyl sulfate + adenosine 3',5'-bisphosphate + H(+). The enzyme catalyses 4-nitrophenol + 3'-phosphoadenylyl sulfate = 4-nitrophenyl sulfate + adenosine 3',5'-bisphosphate. It catalyses the reaction dopamine + 3'-phosphoadenylyl sulfate = dopamine 3-O-sulfate + adenosine 3',5'-bisphosphate + H(+). The catalysed reaction is dopamine + 3'-phosphoadenylyl sulfate = dopamine 4-O-sulfate + adenosine 3',5'-bisphosphate + H(+). It carries out the reaction 3,3',5-triiodo-L-thyronine + 3'-phosphoadenylyl sulfate = 3,3',5-triiodo-L-thyronine sulfate + adenosine 3',5'-bisphosphate + H(+). The enzyme catalyses 3,3',5'-triiodo-L-thyronine + 3'-phosphoadenylyl sulfate = 3,3',5'-triiodo-L-thyronine sulfate + adenosine 3',5'-bisphosphate + H(+). It catalyses the reaction 3,3'-diiodo-L-thyronine + 3'-phosphoadenylyl sulfate = 3,3'-diiodo-L-thyronine sulfate + adenosine 3',5'-bisphosphate + H(+). The catalysed reaction is L-thyroxine + 3'-phosphoadenylyl sulfate = L-thyroxine sulfate + adenosine 3',5'-bisphosphate + H(+). Functionally, sulfotransferase that utilizes 3'-phospho-5'-adenylyl sulfate (PAPS) as sulfonate donor to catalyze the sulfate conjugation of a wide variety of acceptor molecules bearing a hydroxyl or an amine group. Sulfonation increases the water solubility of most compounds, and therefore their renal excretion, but it can also result in bioactivation to form active metabolites. Displays broad substrate specificity for small phenolic compounds. Plays an important role in the sulfonation of endogenous molecules such as steroid hormones. Mediates also the metabolic activation of carcinogenic N-hydroxyarylamines leading to highly reactive intermediates capable of forming DNA adducts, potentially resulting in mutagenesis. May play a role in gut microbiota-host metabolic interaction. O-sulfonates 4-ethylphenol (4-EP), a dietary tyrosine-derived metabolite produced by gut bacteria. The product 4-EPS crosses the blood-brain barrier and may negatively regulate oligodendrocyte maturation and myelination, affecting the functional connectivity of different brain regions associated with the limbic system. Catalyzes the sulfate conjugation of dopamine. Catalyzes the sulfation of T4 (L-thyroxine/3,5,3',5'-tetraiodothyronine), T3 (3,5,3'-triiodothyronine), rT3 (3,3',5'-triiodothyronine) and 3,3'-T2 (3,3'-diiodothyronine), with a substrate preference of 3,3'-T2 &gt; rT3 &gt; T3 &gt; T4. This is Sulfotransferase 1A1 (SULT1A1) from Macaca fascicularis (Crab-eating macaque).